The primary structure comprises 502 residues: Cytochrome P450 83A1 (502 aa).

The chain crosses the membrane as a helical span at residues 1–21 (MEDIIIGVVALAAVLLFFLYQ). Cys442 contributes to the heme binding site.

The protein belongs to the cytochrome P450 family. Requires heme as cofactor.

The protein resides in the endoplasmic reticulum membrane. It carries out the reaction an (E)-omega-(methylsulfanyl)-alkanal oxime + glutathione + reduced [NADPH--hemoprotein reductase] + O2 = an S-[(1E)-1-(hydroxyimino)-omega-(methylsulfanyl)alkyl]-L-glutathione + oxidized [NADPH--hemoprotein reductase] + 2 H2O + H(+). In terms of biological role, involved in the metabolism of aliphatic and aromatic oximes. Involved in the biosynthesis of both short-chain and long-chain aliphatic glucosinolates. The sequence is that of Cytochrome P450 83A1 (CYP83A1) from Arabidopsis thaliana (Mouse-ear cress).